Reading from the N-terminus, the 262-residue chain is Small ribosomal subunit protein uS2 (262 aa).

The protein belongs to the universal ribosomal protein uS2 family.

The chain is Small ribosomal subunit protein uS2 from Borreliella afzelii (strain PKo) (Borrelia afzelii).